A 195-amino-acid chain; its full sequence is Flavin prenyltransferase UbiX (195 aa).

Residues 17–19 (GGS), Ser43, 94–97 (SAGT), and Arg129 each bind FMN. 2 residues coordinate dimethylallyl phosphate: Tyr159 and Arg175.

This sequence belongs to the UbiX/PAD1 family.

The catalysed reaction is dimethylallyl phosphate + FMNH2 = prenylated FMNH2 + phosphate. In terms of biological role, flavin prenyltransferase that catalyzes the synthesis of the prenylated FMN cofactor (prenyl-FMN) for 4-hydroxy-3-polyprenylbenzoic acid decarboxylase UbiD. The prenyltransferase is metal-independent and links a dimethylallyl moiety from dimethylallyl monophosphate (DMAP) to the flavin N5 and C6 atoms of FMN. This Deinococcus radiodurans (strain ATCC 13939 / DSM 20539 / JCM 16871 / CCUG 27074 / LMG 4051 / NBRC 15346 / NCIMB 9279 / VKM B-1422 / R1) protein is Flavin prenyltransferase UbiX.